Here is a 246-residue protein sequence, read N- to C-terminus: Probable transcriptional regulatory protein YebC (246 aa).

The segment at 1–20 is disordered; that stretch reads MAGHSKWANTRHRKAAQDAK.

This sequence belongs to the TACO1 family.

It localises to the cytoplasm. The sequence is that of Probable transcriptional regulatory protein YebC from Escherichia coli O6:K15:H31 (strain 536 / UPEC).